Reading from the N-terminus, the 363-residue chain is Cinnamyl alcohol dehydrogenase 2 (363 aa).

Cys47 contacts Zn(2+). NADP(+) is bound at residue Thr49. Zn(2+)-binding residues include His69, Glu70, Cys100, Cys103, Cys106, Cys114, and Cys163. NADP(+) contacts are provided by residues Thr167, 188–193 (GLGGVG), 211–216 (SSSARK), Thr251, Gly275, and 298–300 (SFI).

Belongs to the zinc-containing alcohol dehydrogenase family. In terms of assembly, homodimer. It depends on Zn(2+) as a cofactor. As to expression, expressed in roots behind the root tips in the pericycle region and layer of cortical cells adjacent to the exodermis. Expressed in vascular bundles and lateral veins of leaf sheaths and blades. Expressed in the vicinity of vascular bundles in the first internode below the inflorescence. Highly expressed in the culm.

It carries out the reaction (E)-cinnamyl alcohol + NADP(+) = (E)-cinnamaldehyde + NADPH + H(+). The enzyme catalyses (E)-coniferol + NADP(+) = (E)-coniferaldehyde + NADPH + H(+). It catalyses the reaction (E)-sinapyl alcohol + NADP(+) = (E)-sinapaldehyde + NADPH + H(+). The catalysed reaction is (E)-4-coumaroyl alcohol + NADP(+) = (E)-4-coumaraldehyde + NADPH + H(+). It carries out the reaction (E)-caffeyl alcohol + NADP(+) = (E)-caffeyl aldehyde + NADPH + H(+). Its pathway is aromatic compound metabolism; phenylpropanoid biosynthesis. Involved in lignin biosynthesis. Catalyzes the final step specific for the production of lignin monomers. Catalyzes the NADPH-dependent reduction of coniferaldehyde and sinapaldehyde to their respective alcohols. Plays the major role in monolignol biosynthesis. Functions cooperatively with COMT in the culm internodes for the biosynthesis of monolignols, the lignin precursors. May be involved in lignin biosynthesis in leaves and roots. The sequence is that of Cinnamyl alcohol dehydrogenase 2 from Oryza sativa subsp. japonica (Rice).